The chain runs to 168 residues: Endoribonuclease YbeY (168 aa).

Residues His128, His132, and His138 each coordinate Zn(2+).

It belongs to the endoribonuclease YbeY family. It depends on Zn(2+) as a cofactor.

Its subcellular location is the cytoplasm. Single strand-specific metallo-endoribonuclease involved in late-stage 70S ribosome quality control and in maturation of the 3' terminus of the 16S rRNA. The chain is Endoribonuclease YbeY from Sphingopyxis alaskensis (strain DSM 13593 / LMG 18877 / RB2256) (Sphingomonas alaskensis).